We begin with the raw amino-acid sequence, 328 residues long: DNA-directed RNA polymerase subunit alpha 2 (328 aa).

The segment at 1-234 (MQGSVIEFLK…EQLDAFVDLR (234 aa)) is alpha N-terminal domain (alpha-NTD). The tract at residues 248 to 328 (FDPILLRPVD…NWPPASLSED (81 aa)) is alpha C-terminal domain (alpha-CTD).

This sequence belongs to the RNA polymerase alpha chain family. In terms of assembly, homodimer. The RNAP catalytic core consists of 2 alpha, 1 beta, 1 beta' and 1 omega subunit. When a sigma factor is associated with the core the holoenzyme is formed, which can initiate transcription.

It catalyses the reaction RNA(n) + a ribonucleoside 5'-triphosphate = RNA(n+1) + diphosphate. DNA-dependent RNA polymerase catalyzes the transcription of DNA into RNA using the four ribonucleoside triphosphates as substrates. This is DNA-directed RNA polymerase subunit alpha 2 from Psychromonas ingrahamii (strain DSM 17664 / CCUG 51855 / 37).